The following is a 119-amino-acid chain: Large ribosomal subunit protein bL20 (119 aa).

It belongs to the bacterial ribosomal protein bL20 family.

In terms of biological role, binds directly to 23S ribosomal RNA and is necessary for the in vitro assembly process of the 50S ribosomal subunit. It is not involved in the protein synthesizing functions of that subunit. The polypeptide is Large ribosomal subunit protein bL20 (Acidovorax sp. (strain JS42)).